The primary structure comprises 189 residues: MLVGYARVSTEGQSLNRQIDMLVDYGLDKRNIYQEKISGTKLRRDQLDKMIEELQEGDTVIITDLTRISRSTKDLLNIIDRIKEKGASIKSLKDTWLDTSGDNPYNSFLLTVMSGLSQLERDLISQRTKEGLRSAKARGRNGGRPSKRNDKADTVGLLYREGYKIVDIVKQTELSRATVYRILKDLNLK.

A Resolvase/invertase-type recombinase catalytic domain is found at 1-139; the sequence is MLVGYARVST…EGLRSAKARG (139 aa). Ser-9 functions as the O-(5'-phospho-DNA)-serine intermediate in the catalytic mechanism. The segment at 130–151 is disordered; it reads EGLRSAKARGRNGGRPSKRNDK. Positions 165 to 184 form a DNA-binding region, H-T-H motif; that stretch reads IVDIVKQTELSRATVYRILK.

This sequence belongs to the site-specific recombinase resolvase family.

A likely role for the res protein would be to stabilize pCP13 by reducing the number of plasmid multimers resulting from homologous recombination. The protein is Resolvase (res) of Clostridium perfringens (strain 13 / Type A).